We begin with the raw amino-acid sequence, 143 residues long: Putative pre-16S rRNA nuclease (143 aa).

This sequence belongs to the YqgF nuclease family.

It localises to the cytoplasm. In terms of biological role, could be a nuclease involved in processing of the 5'-end of pre-16S rRNA. The sequence is that of Putative pre-16S rRNA nuclease (ybeB) from Lactococcus lactis subsp. lactis (strain IL1403) (Streptococcus lactis).